The primary structure comprises 84 residues: Large ribosomal subunit protein bL27 (84 aa).

Residues 1-20 (MAHKKAGGSTRNGRDSNPKY) form a disordered region.

The protein belongs to the bacterial ribosomal protein bL27 family.

The polypeptide is Large ribosomal subunit protein bL27 (Francisella philomiragia subsp. philomiragia (strain ATCC 25017 / CCUG 19701 / FSC 153 / O#319-036)).